A 3312-amino-acid chain; its full sequence is Cadherin EGF LAG seven-pass G-type receptor 3 (3312 aa).

Residues 1–32 form the signal peptide; that stretch reads MMARRPPWRGLGGRSTPILLLLLLSLFPLSQE. Residues 33–2540 lie on the Extracellular side of the membrane; that stretch reads ELGGGGHQGW…RLEGDLELLA (2508 aa). Disordered regions lie at residues 90–112, 143–199, and 212–306; these read GRRQSARNSRGPPEQPNEELGIE, GRTG…RKRV, and GSKG…EARK. Residues 159-173 show a composition bias toward low complexity; sequence SSGVPGSGNSSPLPS. A compositionally biased stretch (pro residues) spans 290–299; sequence RPGPRPPGLP. 9 consecutive Cadherin domains span residues 326 to 433, 434 to 545, 546 to 651, 652 to 756, 757 to 858, 859 to 961, 962 to 1067, 1068 to 1169, and 1170 to 1265; these read PQYN…SPVF, EQAQ…APQF, SEKR…IPIF, VSTP…RPEF, TMKE…RPVF, QSAH…APQF, VASH…APVF, PAEE…SPVL, and NNFQ…RVVI. An N-linked (GlcNAc...) asparagine glycan is attached at N632. The N-linked (GlcNAc...) asparagine glycan is linked to N847. N-linked (GlcNAc...) asparagine glycans are attached at residues N1182, N1222, N1317, and N1327. The region spanning 1375–1433 is the EGF-like 1; calcium-binding domain; the sequence is DDNVCLREPCENYMKCVSVLRFDSSAPFLASASTLFRPIQPIAGLRCRCPPGFTGDFCE. Cystine bridges form between C1379–C1390, C1384–C1421, C1423–C1432, C1439–C1450, C1444–C1459, C1461–C1470, C1479–C1490, C1484–C1500, and C1502–C1513. The EGF-like 2; calcium-binding domain occupies 1435–1471; it reads ELDLCYSNPCRNGGACARREGGYTCVCRPRFTGEDCE. The 40-residue stretch at 1475–1514 folds into the EGF-like 3; calcium-binding domain; that stretch reads EAGRCVPGVCRNGGTCTDAPNGGFRCQCPAGGAFEGPRCE. Residues 1515–1719 form the Laminin G-like 1 domain; the sequence is VAARSFPPSS…VANNGTMAGC (205 aa). N1649 and N1713 each carry an N-linked (GlcNAc...) asparagine glycan. Disulfide bonds link C1693/C1719, C1726/C1737, C1731/C1746, and C1748/C1757. The EGF-like 4; calcium-binding domain occupies 1722–1758; that stretch reads KLHFCDSGPCKNSGFCSERWGSFSCDCPVGFGGKDCQ. Residues 1764-1944 form the Laminin G-like 2 domain; sequence PHHFRGNGTL…SHRVNAEPGC (181 aa). Residue N1770 is glycosylated (N-linked (GlcNAc...) asparagine). Cystine bridges form between C1915–C1944, C1950–C1961, C1955–C1970, C1972–C1981, C1985–C1996, C1990–C2008, C2010–C2019, C2027–C2040, and C2042–C2052. The region spanning 1946–1982 is the EGF-like 5; calcium-binding domain; it reads VTNACASGPCPPHADCRDLWQTFSCTCQPGYYGPGCV. D1963 carries the post-translational modification (3R)-3-hydroxyaspartate. Residues 1983 to 2020 form the EGF-like 6; calcium-binding domain; it reads DACLLNPCQNQGSCRHLPGAPHGYTCDCVGGYFGHHCE. The EGF-like 7; calcium-binding domain maps to 2021 to 2053; the sequence is HRMDQQCPRGWWGSPTCGPCNCDVHKGFDPNCN. N2053 carries N-linked (GlcNAc...) asparagine glycosylation. One can recognise an EGF-like 8; calcium-binding domain in the interval 2055–2090; it reads TNGQCHCKEFHYRPRGSDSCLPCDCYPVGSTSRSCA. Disulfide bonds link C2059–C2074, C2061–C2077, C2079–C2089, C2098–C2107, and C2110–C2122. A Laminin EGF-like domain is found at 2077–2124; that stretch reads CDCYPVGSTSRSCAPHSGQCPCRPGALGRQCNSCDSPFAEVTASGCRV. Y2126 carries the post-translational modification Phosphotyrosine. N2177, N2196, N2386, N2474, and N2506 each carry an N-linked (GlcNAc...) asparagine glycan. Residues 2361 to 2399 form a disordered region; it reads THVLLPSQSPRPSPSEVLPTSSSIENSTTSSVVPPPAPP. A GAIN-B domain is found at 2368–2530; it reads QSPRPSPSEV…GVLMDASPRE (163 aa). Over residues 2380 to 2391 the composition is skewed to low complexity; it reads TSSSIENSTTSS. Disulfide bonds link C2480-C2512 and C2500-C2514. A GPS region spans residues 2480–2530; sequence CVQWDPPGLAEQHGVWTARDCELVHRNGSHARCRCSRTGTFGVLMDASPRE. Residues 2541-2561 traverse the membrane as a helical segment; the sequence is VFTHVVVAVSVAALVLTAAIL. Residues 2562–2572 are Cytoplasmic-facing; the sequence is LSLRSLKSNVR. Residues 2573-2593 form a helical membrane-spanning segment; sequence GIHANVAAALGVAELLFLLGI. The Extracellular segment spans residues 2594 to 2601; that stretch reads HRTHNQLV. Residues 2602-2622 traverse the membrane as a helical segment; it reads CTAVAILLHYFFLSTFAWLFV. The Cytoplasmic portion of the chain corresponds to 2623–2643; sequence QGLHLYRMQVEPRNVDRGAMR. Residues 2644-2664 form a helical membrane-spanning segment; that stretch reads FYHALGWGVPAVLLGLAVGLD. Residues 2665–2681 are Extracellular-facing; sequence PEGYGNPDFCWISVHEP. The helical transmembrane segment at 2682-2702 threads the bilayer; that stretch reads LIWSFAGPVVLVIVMNGTMFL. At 2703 to 2725 the chain is on the cytoplasmic side; it reads LAARTSCSTGQREAKKTSALTLR. The helical transmembrane segment at 2726 to 2746 threads the bilayer; sequence SSFLLLLLVSASWLFGLLAVN. Residues 2747–2753 lie on the Extracellular side of the membrane; that stretch reads HSILAFH. Residues 2754–2774 traverse the membrane as a helical segment; it reads YLHAGLCGLQGLAVLLLFCVL. Residues 2775–3312 lie on the Cytoplasmic side of the membrane; it reads NADARAAWMP…SEVPRSEGHS (538 aa). Disordered regions lie at residues 2888–2927 and 2978–3006; these read AGADSDSDSDLSLEEERSLSIPSSESEDNGRTRGRFQRPL and TSKDAANNNQPDPALTSGDETSLGRAQRQ. Positions 2890–2900 are enriched in acidic residues; the sequence is ADSDSDSDLSL. Position 3051 is a phosphotyrosine (Y3051). Disordered regions lie at residues 3086–3243 and 3256–3312; these read EEAP…TEQL and SALS…EGHS. Residue S3097 is modified to Phosphoserine. 3 stretches are compositionally biased toward low complexity: residues 3175–3198, 3256–3265, and 3272–3281; these read SPQRQLSRDPLLPSRPLDSLSRSS, SALSSVQSSS, and TTATPSATAS. Over residues 3287–3300 the composition is skewed to polar residues; it reads TPRSATSHSISELS.

This sequence belongs to the G-protein coupled receptor 2 family. LN-TM7 subfamily.

Its subcellular location is the cell membrane. Functionally, receptor that may have an important role in cell/cell signaling during nervous system formation. This chain is Cadherin EGF LAG seven-pass G-type receptor 3 (CELSR3), found in Homo sapiens (Human).